Reading from the N-terminus, the 266-residue chain is Receptor-recognizing protein gp38 (266 aa).

Short sequence motifs (GRM) lie at residues 116–123, 126–137, 157–171, 174–184, 187–191, 194–200, 202–209, 214–220, 223–228, and 232–246; these read GRGGNGGY, SGGDGNGTQGGH, AGGG…RPHS, KWQDIGGGGGR, GGAGG, YSGGAAS, EGPGGGYD, HSGAGGN, AAGQNA, and GGKV…ASGH.

It belongs to the receptor-recognizing protein gp38 family.

It is found in the virion. In terms of biological role, receptor binding protein (RBP) that is at the tip of the long tail fibers and serves as the phage recognition site for the attachment host receptor. Probably uses the host receptor OmpA. This is Receptor-recognizing protein gp38 (38) from Enterobacteria phage Ox2 (Bacteriophage Ox2).